The primary structure comprises 290 residues: 3-deoxy-manno-octulosonate cytidylyltransferase, mitochondrial (290 aa).

The N-terminal 50 residues, Met-1–Pro-50, are a transit peptide targeting the mitochondrion.

Belongs to the KdsB family. The cofactor is Mg(2+). As to expression, expressed in roots, leaves, stems and siliques.

It is found in the mitochondrion outer membrane. It carries out the reaction 3-deoxy-alpha-D-manno-oct-2-ulosonate + CTP = CMP-3-deoxy-beta-D-manno-octulosonate + diphosphate. Its pathway is nucleotide-sugar biosynthesis; CMP-3-deoxy-D-manno-octulosonate biosynthesis; CMP-3-deoxy-D-manno-octulosonate from 3-deoxy-D-manno-octulosonate and CTP: step 1/1. Its activity is regulated as follows. Inhibited by 2beta-deoxy-Kdo. In terms of biological role, catalyzes the production of the sugar nucleotide CMP-3-deoxy-D-manno-octulosonate (CMP-KDO). CTP is the preferred nucleotide donor, but it can partially be replaced with UTP. Activates KDO during the biosynthesis of rhamnogalacturonan II (RG-II), a structurally complex pectic polysaccharide of the primary cell wall. RG-II is essential for the cell wall integrity of rapidly growing tissues and pollen tube growth and elongation. The polypeptide is 3-deoxy-manno-octulosonate cytidylyltransferase, mitochondrial (Arabidopsis thaliana (Mouse-ear cress)).